Reading from the N-terminus, the 86-residue chain is Colicin-E2 immunity protein (86 aa).

Belongs to the colicins ColE2/ColE8/ColE9 and pyocins S1/S2 family.

Functionally, this protein is able to protect a cell, which harbors the plasmid ColE2 encoding colicin E2, against colicin E2. This chain is Colicin-E2 immunity protein (imm), found in Escherichia coli.